The following is a 528-amino-acid chain: Phosphoenolpyruvate carboxykinase (ATP) (528 aa).

Substrate-binding residues include Arg56, Tyr192, and Lys198. ATP is bound by residues Lys198, His217, and 233–241 (GLSGTGKTT). Positions 198 and 217 each coordinate Mn(2+). Asp254 provides a ligand contact to Mn(2+). Positions 282, 319, and 444 each coordinate ATP. A substrate-binding site is contributed by Arg319.

This sequence belongs to the phosphoenolpyruvate carboxykinase (ATP) family. Mn(2+) serves as cofactor.

The protein resides in the cytoplasm. It carries out the reaction oxaloacetate + ATP = phosphoenolpyruvate + ADP + CO2. Its pathway is carbohydrate biosynthesis; gluconeogenesis. Functionally, involved in the gluconeogenesis. Catalyzes the conversion of oxaloacetate (OAA) to phosphoenolpyruvate (PEP) through direct phosphoryl transfer between the nucleoside triphosphate and OAA. The chain is Phosphoenolpyruvate carboxykinase (ATP) from Lysinibacillus sphaericus (strain C3-41).